Here is a 412-residue protein sequence, read N- to C-terminus: Glucose-1-phosphate adenylyltransferase (412 aa).

Residues tyrosine 98, glycine 163, 178-179, and serine 189 each bind alpha-D-glucose 1-phosphate; that span reads EK.

This sequence belongs to the bacterial/plant glucose-1-phosphate adenylyltransferase family. Homotetramer.

The catalysed reaction is alpha-D-glucose 1-phosphate + ATP + H(+) = ADP-alpha-D-glucose + diphosphate. Its pathway is glycan biosynthesis; glycogen biosynthesis. Its function is as follows. Involved in the biosynthesis of ADP-glucose, a building block required for the elongation reactions to produce glycogen. Catalyzes the reaction between ATP and alpha-D-glucose 1-phosphate (G1P) to produce pyrophosphate and ADP-Glc. The polypeptide is Glucose-1-phosphate adenylyltransferase (Thermosipho africanus (strain TCF52B)).